The chain runs to 432 residues: MQVTVETKEGLERVLTITVPAANIEDAVSAELRNIAKNRRFDGFRKGKVPMKMVAKMYGQAVRNDVMGEVMQRHFIEAIVKEKINPAGAPTFTPVEFAEGKDLVFTASFEVYPEVALQGLDKVVVEKPQVEVKDEDVAEMLETLRKQQSTWADADIAAEDGTRATINFVGSIDGEEFEGGKAENFPLEMGQGRMIPGFEDGIKGKKAGEELTIDVNFPEEYHAENLKGKAAQFAIKVVKVESRELPELNDEFVAKFGAEGGVEGLKAEVRKNMERELAQAVKNKIKEQAINGLVEQNNIDVPSALIDQEVQVLRQQAVQRFGGNADTAPELPRELFEEQAKRRVVVGLLLGEVIKSEELKADDEKVKALINEMASAYEDPTEVVAYYEGNEQMMNNMRNVALEEQAVEAILAKAQVSEKAFGFNELMNQQPA.

A PPIase FKBP-type domain is found at 161 to 246; sequence GTRATINFVG…VVKVESRELP (86 aa).

This sequence belongs to the FKBP-type PPIase family. Tig subfamily.

It localises to the cytoplasm. It catalyses the reaction [protein]-peptidylproline (omega=180) = [protein]-peptidylproline (omega=0). In terms of biological role, involved in protein export. Acts as a chaperone by maintaining the newly synthesized protein in an open conformation. Functions as a peptidyl-prolyl cis-trans isomerase. This Aliivibrio fischeri (strain ATCC 700601 / ES114) (Vibrio fischeri) protein is Trigger factor.